Consider the following 249-residue polypeptide: MMGKPEDLKLIDENGRRIDGRKKYELRPIKMEVGVLKNADGSAYVEWGKNKILAAVYGPREIHPKHLQRPDRAILRVRYNMAPFSVEERKKPGPDRRSVEISKVIRGALEPALILEMFPRTAIDIFIEVLQADAGTRVAGITAASLALADAGIPMRDLVAACAAGKIEGEIVLDLNKEEDNYGEADVPVAIMPLKNDITLLQMDGYLTRDEFIEAVRLAIKGAKAVYQKQREALKEKYLKIAEEVGGGE.

The protein belongs to the RNase PH family. Rrp41 subfamily. As to quaternary structure, component of the archaeal exosome complex. Forms a hexameric ring-like arrangement composed of 3 Rrp41-Rrp42 heterodimers. The hexameric ring associates with a trimer of Rrp4 and/or Csl4 subunits.

It localises to the cytoplasm. In terms of biological role, catalytic component of the exosome, which is a complex involved in RNA degradation. Has 3'-&gt;5' exoribonuclease activity. Can also synthesize heteromeric RNA-tails. This chain is Exosome complex component Rrp41, found in Thermococcus onnurineus (strain NA1).